The following is a 298-amino-acid chain: Inosose dehydratase (298 aa).

This sequence belongs to the IolE/MocC family. The cofactor is glutathione. Co(2+) is required as a cofactor. It depends on Mn(2+) as a cofactor.

It carries out the reaction scyllo-inosose = 3D-3,5/4-trihydroxycyclohexane-1,2-dione + H2O. In terms of biological role, catalyzes the dehydration of inosose (2-keto-myo-inositol, 2KMI or 2,4,6/3,5-pentahydroxycyclohexanone) to 3D-(3,5/4)-trihydroxycyclohexane-1,2-dione (D-2,3-diketo-4-deoxy-epi-inositol). In Serratia proteamaculans (strain 568), this protein is Inosose dehydratase.